Reading from the N-terminus, the 177-residue chain is ATP synthase subunit delta (177 aa).

Belongs to the ATPase delta chain family. F-type ATPases have 2 components, F(1) - the catalytic core - and F(0) - the membrane proton channel. F(1) has five subunits: alpha(3), beta(3), gamma(1), delta(1), epsilon(1). F(0) has three main subunits: a(1), b(2) and c(10-14). The alpha and beta chains form an alternating ring which encloses part of the gamma chain. F(1) is attached to F(0) by a central stalk formed by the gamma and epsilon chains, while a peripheral stalk is formed by the delta and b chains.

Its subcellular location is the cell inner membrane. In terms of biological role, f(1)F(0) ATP synthase produces ATP from ADP in the presence of a proton or sodium gradient. F-type ATPases consist of two structural domains, F(1) containing the extramembraneous catalytic core and F(0) containing the membrane proton channel, linked together by a central stalk and a peripheral stalk. During catalysis, ATP synthesis in the catalytic domain of F(1) is coupled via a rotary mechanism of the central stalk subunits to proton translocation. This protein is part of the stalk that links CF(0) to CF(1). It either transmits conformational changes from CF(0) to CF(1) or is implicated in proton conduction. In Aliivibrio fischeri (strain ATCC 700601 / ES114) (Vibrio fischeri), this protein is ATP synthase subunit delta.